Reading from the N-terminus, the 160-residue chain is Cytochrome b6-f complex subunit 4 (160 aa).

Helical transmembrane passes span 36-56, 96-116, and 131-151; these read IFYMFPVVIFGTFAGVIGLAV, LGVLLMAAVPAGLITVPFIKI, and TVFLVGTVAAIWLGIGAALPI.

The protein belongs to the cytochrome b family. PetD subfamily. The 4 large subunits of the cytochrome b6-f complex are cytochrome b6, subunit IV (17 kDa polypeptide, petD), cytochrome f and the Rieske protein, while the 4 small subunits are petG, petL, petM and petN. The complex functions as a dimer.

It is found in the plastid. It localises to the chloroplast thylakoid membrane. In terms of biological role, component of the cytochrome b6-f complex, which mediates electron transfer between photosystem II (PSII) and photosystem I (PSI), cyclic electron flow around PSI, and state transitions. In Auxenochlorella protothecoides (Green microalga), this protein is Cytochrome b6-f complex subunit 4.